A 317-amino-acid polypeptide reads, in one-letter code: L-lactate dehydrogenase (317 aa).

Residues valine 16, aspartate 37, and tyrosine 69 each contribute to the NAD(+) site. Substrate is bound by residues glutamine 86, arginine 92, and 124 to 127 (NPVD). NAD(+) is bound by residues 122-124 (ASN) and serine 147. 152-155 (DSAR) contacts substrate. The Proton acceptor role is filled by histidine 179. Phosphotyrosine is present on tyrosine 223. Threonine 232 serves as a coordination point for substrate.

It belongs to the LDH/MDH superfamily. LDH family. In terms of assembly, homotetramer.

The protein localises to the cytoplasm. It catalyses the reaction (S)-lactate + NAD(+) = pyruvate + NADH + H(+). It functions in the pathway fermentation; pyruvate fermentation to lactate; (S)-lactate from pyruvate: step 1/1. Its function is as follows. Catalyzes the conversion of lactate to pyruvate. The chain is L-lactate dehydrogenase from Mycoplasma capricolum subsp. capricolum (strain California kid / ATCC 27343 / NCTC 10154).